A 422-amino-acid chain; its full sequence is E3 ubiquitin-protein ligase IE2 (422 aa).

The span at 1-10 (MSRQINAVTP) shows a compositional bias: polar residues. Disordered regions lie at residues 1-86 (MSRQ…VQII) and 165-215 (SPRS…EGEE). The segment covering 14 to 26 (SRRHRLSLSRRRI) has biased composition (basic residues). A compositionally biased stretch (low complexity) spans 36–63 (PSSSSRSQPSSSSRSQPYSSSRSQPYSS). Positions 71 to 80 (ERSQEQRVSE) are enriched in basic and acidic residues. The span at 179–196 (DVLSQSPDLFDSPQSPQQ) shows a compositional bias: polar residues. Positions 200–215 (ELEDEDEEEEEEEGEE) are enriched in acidic residues. An RING-type; degenerate zinc finger spans residues 220–268 (CNICFTTLKDTKNVDSSFVTSIDCNHAVCFKCYVRIIMDNSTYKCFCSA). Residues 314–414 (IDLNDVERLE…RRNSELVAEL (101 aa)) are a coiled coil.

This sequence belongs to the alphabaculovirus IE2 protein family. Homooligomer. Post-translationally, auto-ubiquitinated.

Its subcellular location is the host nucleus. The enzyme catalyses S-ubiquitinyl-[E2 ubiquitin-conjugating enzyme]-L-cysteine + [acceptor protein]-L-lysine = [E2 ubiquitin-conjugating enzyme]-L-cysteine + N(6)-ubiquitinyl-[acceptor protein]-L-lysine.. RING-finger E3 ubiquitin ligase that plays an important regulatory role during the initial stages of infection. Migrates to specific nuclear foci early in infection supposely to prepare the sites for viral replication by targeting and ubiquitinating host proteins. The polypeptide is E3 ubiquitin-protein ligase IE2 (IE2) (Bombyx mori nuclear polyhedrosis virus (BmNPV)).